The sequence spans 260 residues: Pyridoxine 5'-phosphate synthase (260 aa).

N15 contributes to the 3-amino-2-oxopropyl phosphate binding site. 17 to 18 contributes to the 1-deoxy-D-xylulose 5-phosphate binding site; that stretch reads DH. R26 lines the 3-amino-2-oxopropyl phosphate pocket. Catalysis depends on H51, which acts as the Proton acceptor. 1-deoxy-D-xylulose 5-phosphate is bound by residues R53 and H58. The Proton acceptor role is filled by E78. A 1-deoxy-D-xylulose 5-phosphate-binding site is contributed by T108. H199 (proton donor) is an active-site residue. Residues G200 and 221–222 each bind 3-amino-2-oxopropyl phosphate; that span reads GH.

This sequence belongs to the PNP synthase family. In terms of assembly, homooctamer; tetramer of dimers.

It is found in the cytoplasm. It catalyses the reaction 3-amino-2-oxopropyl phosphate + 1-deoxy-D-xylulose 5-phosphate = pyridoxine 5'-phosphate + phosphate + 2 H2O + H(+). Its pathway is cofactor biosynthesis; pyridoxine 5'-phosphate biosynthesis; pyridoxine 5'-phosphate from D-erythrose 4-phosphate: step 5/5. Catalyzes the complicated ring closure reaction between the two acyclic compounds 1-deoxy-D-xylulose-5-phosphate (DXP) and 3-amino-2-oxopropyl phosphate (1-amino-acetone-3-phosphate or AAP) to form pyridoxine 5'-phosphate (PNP) and inorganic phosphate. This is Pyridoxine 5'-phosphate synthase from Cupriavidus necator (strain ATCC 17699 / DSM 428 / KCTC 22496 / NCIMB 10442 / H16 / Stanier 337) (Ralstonia eutropha).